We begin with the raw amino-acid sequence, 110 residues long: MVDKKSRGHINSDLEFKKKKHAREMKYQVLSFGLMIGLTIVAFLTVATDGVGSWFTIPFIILLAAIQVIFQLYYFMHMNQKGHEAPALFLYSGVFVAFITVLAFVTIIWW.

A run of 3 helical transmembrane segments spans residues 27 to 47 (YQVL…LTVA), 50 to 70 (GVGS…QVIF), and 88 to 108 (LFLY…VTII).

Belongs to the cytochrome c oxidase bacterial subunit 4 family.

Its subcellular location is the cell membrane. The catalysed reaction is 4 Fe(II)-[cytochrome c] + O2 + 8 H(+)(in) = 4 Fe(III)-[cytochrome c] + 2 H2O + 4 H(+)(out). This Bacillus subtilis (strain 168) protein is Cytochrome c oxidase subunit 4B (ctaF).